Consider the following 455-residue polypeptide: Retinoic acid receptor beta (455 aa).

The tract at residues 1 to 87 is modulating; that stretch reads MTTSGHACPV…PLPPPRVYKP (87 aa). A disordered region spans residues 47–78; sequence HPPPSGCSTPSPATIETQSTSSEELVPSPPSP. The segment covering 53-66 has biased composition (polar residues); that stretch reads CSTPSPATIETQST. The residue at position 77 (serine 77) is a Phosphoserine. 2 consecutive NR C4-type zinc fingers follow at residues 88 to 108 and 124 to 148; these read CFVC…CEGC and CHRD…LQKC. The nuclear receptor DNA-binding region spans 88–153; the sequence is CFVCQDKSSG…RLQKCFEVGM (66 aa). The tract at residues 154–182 is hinge; that stretch reads SKESVRNDRNKKKKETSKQECTESYEMTA. The NR LBD domain maps to 183–417; it reads ELDDLTEKIR…PLIQEMLENS (235 aa). Positions 415–455 are disordered; it reads ENSEGHEPLTPSSSGNTAEHSPSISPSSVENSGVSQSPLVQ. Residues 424 to 434 show a composition bias toward polar residues; it reads TPSSSGNTAEH. Residues 435-455 are compositionally biased toward low complexity; the sequence is SPSISPSSVENSGVSQSPLVQ.

This sequence belongs to the nuclear hormone receptor family. NR1 subfamily. As to quaternary structure, homodimer. Heterodimer; with a RXR molecule. Binds DNA preferentially as a RAR/RXR heterodimer. Heterodimerizes (via NR LBD) with RXRA. Interacts weakly with NCOR2. As to expression, expressed in aortic endothelial cells (at protein level).

It localises to the nucleus. Its subcellular location is the cytoplasm. Its function is as follows. Receptor for retinoic acid. Retinoic acid receptors bind as heterodimers to their target response elements in response to their ligands, all-trans or 9-cis retinoic acid, and regulate gene expression in various biological processes. The RXR/RAR heterodimers bind to the retinoic acid response elements (RARE) composed of tandem 5'-AGGTCA-3' sites known as DR1-DR5. In the absence or presence of hormone ligand, acts mainly as an activator of gene expression due to weak binding to corepressors. The RXRA/RARB heterodimer can act as a repressor on the DR1 element and as an activator on the DR5 element. In concert with RARG, required for skeletal growth, matrix homeostasis and growth plate function. This Homo sapiens (Human) protein is Retinoic acid receptor beta (RARB).